A 193-amino-acid polypeptide reads, in one-letter code: dCTP deaminase (193 aa).

Residues 110–115 (RSSLAR), Asp-128, 136–138 (VLE), Tyr-171, Lys-178, and Gln-182 each bind dCTP. The active-site Proton donor/acceptor is Glu-138. The interval 169 to 193 (RPYNRRQDAKYRDQQGAVASRIDKD) is disordered.

This sequence belongs to the dCTP deaminase family. As to quaternary structure, homotrimer.

It carries out the reaction dCTP + H2O + H(+) = dUTP + NH4(+). It functions in the pathway pyrimidine metabolism; dUMP biosynthesis; dUMP from dCTP (dUTP route): step 1/2. Functionally, catalyzes the deamination of dCTP to dUTP. This Cronobacter sakazakii (strain ATCC BAA-894) (Enterobacter sakazakii) protein is dCTP deaminase.